The primary structure comprises 186 residues: GPI-anchored hemophore ARB_02741 (186 aa).

Residues 1-18 form the signal peptide; the sequence is MKFSQAVIALAAATVVSA. Positions 19 to 108 constitute a CFEM domain; that stretch reads QLPDVPQCSL…SSKPSEPSTS (90 aa). Disulfide bonds link Cys26–Cys67, Cys30–Cys62, Cys40–Cys48, and Cys50–Cys83. Asp45 serves as a coordination point for heme. Residues 89–159 form a disordered region; sequence PVSIPPVEES…NTGVPTQSTP (71 aa). A compositionally biased stretch (low complexity) spans 96–131; the sequence is EESSSKPSEPSTSEAPTASPTESTPAPTTPAPTGTG. Residues 132 to 144 are compositionally biased toward gly residues; it reads SPSGTGAPGGPSG. Residues 148–159 are compositionally biased toward polar residues; it reads FTNTGVPTQSTP. The GPI-anchor amidated glycine moiety is linked to residue Gly163. A propeptide spans 164–186 (removed in mature form); that stretch reads AASGLSANIGGMGAAILAIAAYL.

It belongs to the RBT5 family. The GPI-anchor is attached to the protein in the endoplasmic reticulum and serves to target the protein to the cell surface. There, the glucosamine-inositol phospholipid moiety is cleaved off and the GPI-modified mannoprotein is covalently attached via its lipidless GPI glycan remnant to the 1,6-beta-glucan of the outer cell wall layer.

The protein localises to the secreted. The protein resides in the cell wall. Its subcellular location is the cell membrane. GPI-anchored cell wall protein involved in stabilizing the cell wall. This chain is GPI-anchored hemophore ARB_02741, found in Arthroderma benhamiae (strain ATCC MYA-4681 / CBS 112371) (Trichophyton mentagrophytes).